We begin with the raw amino-acid sequence, 658 residues long: ATP-dependent RNA helicase DDX3Y (658 aa).

Residues 1–10 (MSHVVVKNDP) show a composition bias toward basic and acidic residues. The tract at residues 1 to 141 (MSHVVVKNDP…DDWSKPLPPS (141 aa)) is disordered. Ser2 is modified (N-acetylserine). The span at 15–34 (QLANLDLNSEKQSGGASTAS) shows a compositional bias: polar residues. A compositionally biased stretch (basic and acidic residues) spans 44 to 68 (RNREASKGFHDKDSSGWSCSKDKDA). Lys55 is subject to N6-acetyllysine. A phosphoserine mark is found at Ser81, Ser85, and Ser89. The span at 93 to 128 (GRFDDRGRSDYDGIGNRDRPGFGRFERSGHSRWCDK) shows a compositional bias: basic and acidic residues. At Arg100 the chain carries Omega-N-methylarginine. Ser101 carries the post-translational modification Phosphoserine. Tyr103 carries the phosphotyrosine modification. Omega-N-methylarginine is present on Arg109. 2 positions are modified to phosphoserine: Ser129 and Ser181. A Q motif motif is present at residues 178 to 206 (ENFSDIDMGEIIMGNIELTRYTRPTPVQK). 198–205 (YTRPTPVQ) contacts ATP. The 193-residue stretch at 209–401 (IPIIKGKRDL…RDFLDEYIFL (193 aa)) folds into the Helicase ATP-binding domain. Lys213 participates in a covalent cross-link: Glycyl lysine isopeptide (Lys-Gly) (interchain with G-Cter in SUMO2). 222-229 (AQTGSGKT) is an ATP binding site. Residues 345 to 348 (DEAD) carry the DEAD box motif. The 162-residue stretch at 412 to 573 (NITQKVVWVE…EVPSWLENMA (162 aa)) folds into the Helicase C-terminal domain. At Ser454 the chain carries Phosphoserine. Arg588 is subject to Omega-N-methylarginine. Phosphoserine is present on residues Ser590 and Ser601. The segment at 597 to 625 (DYRQSSGSSSSGFGASRGSSSRSGGSGYG) is disordered. Over residues 601–619 (SSGSSSSGFGASRGSSSRS) the composition is skewed to low complexity. Omega-N-methylarginine occurs at positions 613 and 628.

The protein belongs to the DEAD box helicase family. DDX3/DED1 subfamily. May interact with TDRD3.

The protein resides in the cytoplasm. The protein localises to the nucleus. It carries out the reaction ATP + H2O = ADP + phosphate + H(+). Probable ATP-dependent RNA helicase. May play a role in spermatogenesis. The polypeptide is ATP-dependent RNA helicase DDX3Y (DDX3Y) (Pongo abelii (Sumatran orangutan)).